The sequence spans 366 residues: GTP cyclohydrolase 1 type 2 homolog (366 aa).

A divalent metal cation contacts are provided by histidine 64, histidine 65, aspartate 102, histidine 326, and glutamate 329.

It belongs to the GTP cyclohydrolase I type 2/NIF3 family. In terms of assembly, homohexamer.

This chain is GTP cyclohydrolase 1 type 2 homolog, found in Staphylococcus epidermidis (strain ATCC 35984 / DSM 28319 / BCRC 17069 / CCUG 31568 / BM 3577 / RP62A).